Consider the following 294-residue polypeptide: MIKIYNRKTKAYDVEQVAGLKYINWSYASPIGKSFLELFIKKKMFSKLYGNFCDSPLSKKKIKAFIDEFNIDMSLCNKNIDEFENFNDFFARTLTPEARPIDYSENILISPGDGRLSAFENIDLDKVVQIKGYTYSLKELIDDPKVAEEFEGGTCLILRLCPTDYHRFHFVDSGTCSESKKISGFYYSVNPIALNNVSELFCKNKREWSIFTSDNFGEILHVEVGATCVGTILQTYSPEKRVKKGEEKGYFKFGGSTTILFFKKDTIKIDSDIVEQTKLGFETKVNMGETIGHK.

Catalysis depends on charge relay system; for autoendoproteolytic cleavage activity residues Asp113, His169, and Ser256. Ser256 acts as the Schiff-base intermediate with substrate; via pyruvic acid; for decarboxylase activity in catalysis. Ser256 is modified (pyruvic acid (Ser); by autocatalysis).

It belongs to the phosphatidylserine decarboxylase family. PSD-B subfamily. Prokaryotic type II sub-subfamily. In terms of assembly, heterodimer of a large membrane-associated beta subunit and a small pyruvoyl-containing alpha subunit. The cofactor is pyruvate. Is synthesized initially as an inactive proenzyme. Formation of the active enzyme involves a self-maturation process in which the active site pyruvoyl group is generated from an internal serine residue via an autocatalytic post-translational modification. Two non-identical subunits are generated from the proenzyme in this reaction, and the pyruvate is formed at the N-terminus of the alpha chain, which is derived from the carboxyl end of the proenzyme. The autoendoproteolytic cleavage occurs by a canonical serine protease mechanism, in which the side chain hydroxyl group of the serine supplies its oxygen atom to form the C-terminus of the beta chain, while the remainder of the serine residue undergoes an oxidative deamination to produce ammonia and the pyruvoyl prosthetic group on the alpha chain. During this reaction, the Ser that is part of the protease active site of the proenzyme becomes the pyruvoyl prosthetic group, which constitutes an essential element of the active site of the mature decarboxylase.

It localises to the cell membrane. It carries out the reaction a 1,2-diacyl-sn-glycero-3-phospho-L-serine + H(+) = a 1,2-diacyl-sn-glycero-3-phosphoethanolamine + CO2. It participates in phospholipid metabolism; phosphatidylethanolamine biosynthesis; phosphatidylethanolamine from CDP-diacylglycerol: step 2/2. Functionally, catalyzes the formation of phosphatidylethanolamine (PtdEtn) from phosphatidylserine (PtdSer). This is Phosphatidylserine decarboxylase proenzyme from Clostridium perfringens (strain SM101 / Type A).